Reading from the N-terminus, the 189-residue chain is UPF0301 protein RC0043 (189 aa).

This sequence belongs to the UPF0301 (AlgH) family.

This chain is UPF0301 protein RC0043, found in Rickettsia conorii (strain ATCC VR-613 / Malish 7).